The primary structure comprises 394 residues: GDP-mannose transporter (394 aa).

The Cytoplasmic portion of the chain corresponds to 1–55 (MADKKNEDFVVRMPDNGTVEKEPFLARSPPARARTGSGGGFGDSFSLARVANNPP). Residues 56–76 (AAILAYCLSSISMTVVNKYVV) traverse the membrane as a helical segment. Residues 77–80 (SGSE) lie on the Lumenal side of the membrane. The chain crosses the membrane as a helical span at residues 81-101 (WNLNFFYLAVQAIVCIIAILF). At 102–121 (CKQIGIITNLAPFDNVKAKK) the chain is on the cytoplasmic side. A helical membrane pass occupies residues 122–144 (WFPVSLLLVGMIYTSTKALQFLS). The Lumenal portion of the chain corresponds to 145-149 (VPVYT). A helical membrane pass occupies residues 150–167 (IFKNLTIIAIAYGEVLWF). At 168-173 (GGSVSP) the chain is on the cytoplasmic side. Residues 174–198 (LALVSFGLMVLSSVVAAWADIQSAI) form a helical membrane-spanning segment. Residues 199 to 213 (HGGSHPSEASTAIST) lie on the Lumenal side of the membrane. The helical transmembrane segment at 214-234 (LNAGYAWMGMNVFCSAAYLLG) threads the bilayer. Topologically, residues 235-246 (MRKVIHKMNFKD) are cytoplasmic. The helical transmembrane segment at 247–267 (WDSMFYNNLLTIPVLIVCSLI) threads the bilayer. The Lumenal portion of the chain corresponds to 268–287 (AEDWSAANLARNFPIESRNA). The chain crosses the membrane as a helical span at residues 288–308 (LFIGMIYSGLGAIFISYCSAW). At 309-316 (CIRVTTST) the chain is on the cytoplasmic side. A helical transmembrane segment spans residues 317–339 (TYSMVGALNKLPIAISGLVFFSA). The Lumenal segment spans residues 340–342 (PVT). Residues 343–362 (FGSVSAIVIGFISGIVYAWA) traverse the membrane as a helical segment. Topologically, residues 363-394 (KARQSSQAKSALPTQQPVMSASSQSNKDASNS) are cytoplasmic. The interval 371–394 (KSALPTQQPVMSASSQSNKDASNS) is disordered. Positions 374-394 (LPTQQPVMSASSQSNKDASNS) are enriched in polar residues.

Belongs to the TPT transporter family. SLC35D subfamily. In terms of assembly, homooligomer.

The protein localises to the golgi apparatus membrane. The protein resides in the cytoplasmic vesicle membrane. It localises to the endoplasmic reticulum membrane. Its function is as follows. Involved in the import of GDP-mannose from the cytoplasm into the Golgi lumen. The chain is GDP-mannose transporter (VRG4) from Pyricularia oryzae (strain 70-15 / ATCC MYA-4617 / FGSC 8958) (Rice blast fungus).